Reading from the N-terminus, the 882-residue chain is Alanine--tRNA ligase (882 aa).

Zn(2+)-binding residues include histidine 568, histidine 572, cysteine 670, and histidine 674.

Belongs to the class-II aminoacyl-tRNA synthetase family. It depends on Zn(2+) as a cofactor.

The protein resides in the cytoplasm. The enzyme catalyses tRNA(Ala) + L-alanine + ATP = L-alanyl-tRNA(Ala) + AMP + diphosphate. In terms of biological role, catalyzes the attachment of alanine to tRNA(Ala) in a two-step reaction: alanine is first activated by ATP to form Ala-AMP and then transferred to the acceptor end of tRNA(Ala). Also edits incorrectly charged Ser-tRNA(Ala) and Gly-tRNA(Ala) via its editing domain. The protein is Alanine--tRNA ligase of Lactobacillus johnsonii (strain CNCM I-12250 / La1 / NCC 533).